A 433-amino-acid chain; its full sequence is UDP-N-acetylglucosamine 1-carboxyvinyltransferase 1 (433 aa).

22-23 (KN) provides a ligand contact to phosphoenolpyruvate. Position 95 (Arg-95) interacts with UDP-N-acetyl-alpha-D-glucosamine. Cys-119 serves as the catalytic Proton donor. A 2-(S-cysteinyl)pyruvic acid O-phosphothioketal modification is found at Cys-119. Residues 124-128 (RPVDL), Asp-307, and Val-329 each bind UDP-N-acetyl-alpha-D-glucosamine.

Belongs to the EPSP synthase family. MurA subfamily.

It localises to the cytoplasm. The enzyme catalyses phosphoenolpyruvate + UDP-N-acetyl-alpha-D-glucosamine = UDP-N-acetyl-3-O-(1-carboxyvinyl)-alpha-D-glucosamine + phosphate. It functions in the pathway cell wall biogenesis; peptidoglycan biosynthesis. Functionally, cell wall formation. Adds enolpyruvyl to UDP-N-acetylglucosamine. In Latilactobacillus sakei subsp. sakei (strain 23K) (Lactobacillus sakei subsp. sakei), this protein is UDP-N-acetylglucosamine 1-carboxyvinyltransferase 1.